Reading from the N-terminus, the 558-residue chain is Poly(A) polymerase PAPalpha (558 aa).

The segment covering 1–17 (MNTKTYGVTEPISTNGP) has biased composition (polar residues). Positions 1 to 20 (MNTKTYGVTEPISTNGPTPK) are disordered. ATP contacts are provided by residues 86 to 88 (FGS), 99 to 101 (DID), Asp153, Lys214, Tyr223, and 232 to 233 (GV). Positions 99, 101, and 153 each coordinate Mg(2+). A disordered region spans residues 516–558 (VYEDGEERPKKSGKKRKKVIKEDGQKRVRNESPASSASVNGSS). Over residues 535-545 (IKEDGQKRVRN) the composition is skewed to basic and acidic residues. Residues 547–558 (SPASSASVNGSS) show a composition bias toward low complexity.

It belongs to the poly(A) polymerase family. Requires Mg(2+) as cofactor. Mn(2+) serves as cofactor.

Its subcellular location is the nucleus. It carries out the reaction RNA(n) + ATP = RNA(n)-3'-adenine ribonucleotide + diphosphate. Polymerase that creates the 3'-poly(A) tail of mRNA's. May acquire specificity through interaction with a cleavage and polyadenylation factor. This is Poly(A) polymerase PAPalpha (PAPALPHA) from Candida albicans (strain SC5314 / ATCC MYA-2876) (Yeast).